The chain runs to 343 residues: GTPase Obg (343 aa).

In terms of domain architecture, Obg spans 1–159; it reads MKYIDEVKIQ…FELKLELRVL (159 aa). The region spanning 160 to 334 is the OBG-type G domain; sequence ADVGLLGLPN…LTYAIMGYLE (175 aa). GTP-binding positions include 166 to 173, 191 to 195, 213 to 216, 284 to 287, and 315 to 317; these read GLPNAGKS, FTTLY, DIPG, NKVD, and SAL. 2 residues coordinate Mg(2+): Ser-173 and Thr-193.

It belongs to the TRAFAC class OBG-HflX-like GTPase superfamily. OBG GTPase family. In terms of assembly, monomer. The cofactor is Mg(2+).

It is found in the cytoplasm. Functionally, an essential GTPase which binds GTP, GDP and possibly (p)ppGpp with moderate affinity, with high nucleotide exchange rates and a fairly low GTP hydrolysis rate. Plays a role in control of the cell cycle, stress response, ribosome biogenesis and in those bacteria that undergo differentiation, in morphogenesis control. The chain is GTPase Obg from Nitrosomonas eutropha (strain DSM 101675 / C91 / Nm57).